The following is a 460-amino-acid chain: ATP synthase subunit beta (460 aa).

150 to 157 (GGAGVGKT) contributes to the ATP binding site.

This sequence belongs to the ATPase alpha/beta chains family. As to quaternary structure, F-type ATPases have 2 components, CF(1) - the catalytic core - and CF(0) - the membrane proton channel. CF(1) has five subunits: alpha(3), beta(3), gamma(1), delta(1), epsilon(1). CF(0) has three main subunits: a(1), b(2) and c(9-12). The alpha and beta chains form an alternating ring which encloses part of the gamma chain. CF(1) is attached to CF(0) by a central stalk formed by the gamma and epsilon chains, while a peripheral stalk is formed by the delta and b chains.

The protein resides in the cell inner membrane. It carries out the reaction ATP + H2O + 4 H(+)(in) = ADP + phosphate + 5 H(+)(out). Its function is as follows. Produces ATP from ADP in the presence of a proton gradient across the membrane. The catalytic sites are hosted primarily by the beta subunits. The polypeptide is ATP synthase subunit beta (Salmonella paratyphi A (strain ATCC 9150 / SARB42)).